A 525-amino-acid polypeptide reads, in one-letter code: 2,3-bisphosphoglycerate-independent phosphoglycerate mutase (525 aa).

Residues D18 and S68 each contribute to the Mn(2+) site. Residue S68 is the Phosphoserine intermediate of the active site. Residues H129, 159 to 160 (RD), R194, R200, 269 to 272 (RADR), and K345 contribute to the substrate site. Positions 413, 417, 454, 455, and 473 each coordinate Mn(2+).

This sequence belongs to the BPG-independent phosphoglycerate mutase family. As to quaternary structure, monomer. It depends on Mn(2+) as a cofactor.

The catalysed reaction is (2R)-2-phosphoglycerate = (2R)-3-phosphoglycerate. It participates in carbohydrate degradation; glycolysis; pyruvate from D-glyceraldehyde 3-phosphate: step 3/5. In terms of biological role, catalyzes the interconversion of 2-phosphoglycerate and 3-phosphoglycerate. The polypeptide is 2,3-bisphosphoglycerate-independent phosphoglycerate mutase (Chromohalobacter salexigens (strain ATCC BAA-138 / DSM 3043 / CIP 106854 / NCIMB 13768 / 1H11)).